Here is a 622-residue protein sequence, read N- to C-terminus: MIEIDSIGHFPSSPGVYIMKDAEATVLYVGKARDLRKRIRSYFAASGDSRYQIRFLMARVTDIQFIVTDTEKEALILENTLIKKYRPKYNFNLRDDKTYFSLRMDMSSDFPRLSIIRKVTRDGARYFGPYSSASDARAVLKHLYKLFPLRHYPMETCRRRNRPCLFYQLKQCSAPCHGKISREDYMALAEGAALFLEGKNREILKIFRERMSAAAAAEKYEKAARFRDLIRSIEVTVEKQKVVAQGGDSDVIGFYREGEQLHIALLFLRGGTLTGSRNYSFSWEMDDHEGIASFLNEYYNQEVFIPSEIVLPIAIADPLPQEELLCELRGRRVSITVPQRGNKLELVRLAIKNAETAAAERKKAAESGEAILQTLKERLHLHKLPRRIECYDISNIQGQMAVGSKVAFVDGKADKAHYRRYRIKGVSQSDDFAMMREMFSRRFKPGTAPDDYPDLIIVDGGIGQLNVLTHVLGDLQITDVEAAGLAKSRVDREMGATEISRSDERVFLPNRKNPVVLRQNSAPLLLLARIRDEAHRFAVAYHKKLRGNKLLASQLEAIPGIGIKRRKELLRHFGSLKKISEATLEELRQVQGISATVAESLWKHLHENEKGDTNASPFVNFE.

Positions 12–91 (SSPGVYIMKD…IKKYRPKYNF (80 aa)) constitute a GIY-YIG domain. The 36-residue stretch at 201 to 236 (REILKIFRERMSAAAAAEKYEKAARFRDLIRSIEVT) folds into the UVR domain.

It belongs to the UvrC family. In terms of assembly, interacts with UvrB in an incision complex.

The protein localises to the cytoplasm. The UvrABC repair system catalyzes the recognition and processing of DNA lesions. UvrC both incises the 5' and 3' sides of the lesion. The N-terminal half is responsible for the 3' incision and the C-terminal half is responsible for the 5' incision. In Geotalea daltonii (strain DSM 22248 / JCM 15807 / FRC-32) (Geobacter daltonii), this protein is UvrABC system protein C.